The chain runs to 759 residues: DNA topoisomerase 3 (759 aa).

The Toprim domain maps to 3–147 (RALFVAEKND…RLDIFRARFS (145 aa)). The region spanning 165 to 590 (DEKTVAAVDC…EQIGKYRAIF (426 aa)) is the Topo IA-type catalytic domain. Residue Tyr-334 is the O-(5'-phospho-DNA)-tyrosine intermediate of the active site. The segment at 609–715 (DKNNQAGGGP…KEQEEEEEVF (107 aa)) is disordered. The span at 614–639 (AGGGPGGPGGGGGPPRGPGGGGGGGP) shows a compositional bias: gly residues. Positions 640-649 (TGPPAPPKPP) are enriched in pro residues. Zn(2+)-binding residues include Cys-716, Cys-718, Cys-743, and Cys-753. Residues 716–759 (CQCPEPMRAVTKVVQKEGPNKGKKFYTCSLPYTSSEKCNFFKWA) form a GRF-type zinc finger.

It belongs to the type IA topoisomerase family. In terms of assembly, component of the BTR double Holliday Junction dissolution complex composed of at least him-6, top-3, rmh-1 and rmif-2, which is involved in double strand break repair in the germline. May interact with rmh-1.

It localises to the nucleus. It carries out the reaction ATP-independent breakage of single-stranded DNA, followed by passage and rejoining.. Component of the BTR double Holliday Junction dissolution complex, which is involved in homologous recombination during meiotic double strand break in the germline. Releases the supercoiling and torsional tension of DNA introduced during the DNA replication and transcription by transiently cleaving and rejoining one strand of the DNA duplex. Introduces a single-strand break via transesterification at a target site in duplex DNA. The scissile phosphodiester is attacked by the catalytic tyrosine of the enzyme, resulting in the formation of a DNA-(5'-phosphotyrosyl)-enzyme intermediate and the expulsion of a 3'-OH DNA strand. The free DNA strand than undergoes passage around the unbroken strand thus removing DNA supercoils. Finally, in the religation step, the DNA 3'-OH attacks the covalent intermediate to expel the active-site tyrosine and restore the DNA phosphodiester backbone. The chain is DNA topoisomerase 3 from Caenorhabditis elegans.